The sequence spans 148 residues: Receptor activity-modifying protein 1 (148 aa).

Residues M1 to A26 form the signal peptide. Cystine bridges form between C27–C82, C40–C72, and C57–C104. Topologically, residues C27–I118 are extracellular. Residues L119–R140 form a helical membrane-spanning segment. The Cytoplasmic segment spans residues S141–V148.

Belongs to the RAMP family. As to quaternary structure, heterodimer of CALCRL and RAMP1; the interaction induces allosteric modulation of CALCRL function and CGRP1/CALCA and CGRP2/CALCB ligand specificity. Heterodimer of CALCR and RAMP1; interaction forms the AMYR1 receptor complex for amylin/IAPP and CGRP1/CALCA ligands.

Its subcellular location is the cell membrane. Its function is as follows. Accessory protein that interacts with and modulates the function of G-protein coupled receptors including calcitonin gene-related peptide type 1 receptor (CALCRL) and calcitonin receptor (CALCR). Required for the transport of CALCRL to the plasma membrane. Together with CALCRL, form the receptor complex for the calcitonin gene-related peptides CGRP1/CALCA and CGRP2/CALCB. Together with CALCR, form the AMYR1 receptor complex for amylin/IAPP and CGRP1/CALCA. The polypeptide is Receptor activity-modifying protein 1 (RAMP1) (Cavia porcellus (Guinea pig)).